An 81-amino-acid polypeptide reads, in one-letter code: Protein I5 homolog (81 aa).

Transmembrane regions (helical) follow at residues 8–28 (LITI…FSLV) and 53–73 (MEIF…AAYI).

The protein belongs to the Chordopoxvirinae I5 family.

It is found in the virion membrane. This chain is Protein I5 homolog, found in Vertebrata (FPV).